The sequence spans 236 residues: Leucyl/phenylalanyl-tRNA--protein transferase (236 aa).

This sequence belongs to the L/F-transferase family.

The protein localises to the cytoplasm. The enzyme catalyses N-terminal L-lysyl-[protein] + L-leucyl-tRNA(Leu) = N-terminal L-leucyl-L-lysyl-[protein] + tRNA(Leu) + H(+). It carries out the reaction N-terminal L-arginyl-[protein] + L-leucyl-tRNA(Leu) = N-terminal L-leucyl-L-arginyl-[protein] + tRNA(Leu) + H(+). The catalysed reaction is L-phenylalanyl-tRNA(Phe) + an N-terminal L-alpha-aminoacyl-[protein] = an N-terminal L-phenylalanyl-L-alpha-aminoacyl-[protein] + tRNA(Phe). In terms of biological role, functions in the N-end rule pathway of protein degradation where it conjugates Leu, Phe and, less efficiently, Met from aminoacyl-tRNAs to the N-termini of proteins containing an N-terminal arginine or lysine. In Vibrio parahaemolyticus serotype O3:K6 (strain RIMD 2210633), this protein is Leucyl/phenylalanyl-tRNA--protein transferase.